Here is a 328-residue protein sequence, read N- to C-terminus: Putative HTH-type transcriptional regulatory protein MA_3524 (328 aa).

The HTH cro/C1-type domain occupies Leu-132–Leu-190. Positions Leu-143 to Glu-162 form a DNA-binding region, H-T-H motif.

The polypeptide is Putative HTH-type transcriptional regulatory protein MA_3524 (Methanosarcina acetivorans (strain ATCC 35395 / DSM 2834 / JCM 12185 / C2A)).